The primary structure comprises 290 residues: Endoplasmic reticulum-Golgi intermediate compartment protein 1 (290 aa).

The Cytoplasmic segment spans residues 1–26 (MPFDFRRFDIYRKVPKDLTQPTYTGA). The chain crosses the membrane as a helical span at residues 27 to 47 (IISICCCLFITFLFLSELTGF). Over 48-254 (IANEIVNELY…RRQPMYRFIT (207 aa)) the chain is Lumenal. Asn74 carries N-linked (GlcNAc...) asparagine glycosylation. The helical transmembrane segment at 255-275 (TVCAIIGGTFTVAGILDSFIF) threads the bilayer. Topologically, residues 276 to 290 (TASEAWKKIQLGKMQ) are cytoplasmic.

This sequence belongs to the ERGIC family.

Its subcellular location is the endoplasmic reticulum membrane. The protein localises to the endoplasmic reticulum-Golgi intermediate compartment membrane. The protein resides in the golgi apparatus membrane. Possible role in transport between endoplasmic reticulum and Golgi. The protein is Endoplasmic reticulum-Golgi intermediate compartment protein 1 (ergic1) of Xenopus laevis (African clawed frog).